An 816-amino-acid chain; its full sequence is tRNA(Met) cytidine acetyltransferase TmcA (816 aa).

The ATP site is built by glutamine 265 and arginine 439. The N-acetyltransferase domain maps to 469–664 (ELIRKMEVYL…YTAIVIKPIS (196 aa)). Acetyl-CoA-binding positions include 589–591 (IAT), glutamate 629, and arginine 636.

This sequence belongs to the TmcA family.

The protein localises to the cytoplasm. It carries out the reaction cytidine(34) in elongator tRNA(Met) + acetyl-CoA + ATP + H2O = N(4)-acetylcytidine(34) in elongator tRNA(Met) + ADP + phosphate + CoA + H(+). It catalyses the reaction a cytidine in RNA + acetyl-CoA + ATP + H2O = an N(4)-acetylcytidine in RNA + ADP + phosphate + CoA + H(+). The catalysed reaction is a cytidine in tRNA + acetyl-CoA + ATP + H2O = an N(4)-acetylcytidine in tRNA + ADP + phosphate + CoA + H(+). The enzyme catalyses a cytidine in mRNA + acetyl-CoA + ATP + H2O = an N(4)-acetylcytidine in mRNA + ADP + phosphate + CoA + H(+). Functionally, catalyzes the formation of N(4)-acetylcytidine (ac(4)C) at the wobble position of tRNA(Met), by using acetyl-CoA as an acetyl donor and ATP (or GTP). Catalyzes the formation of 233 N(4)-acetylcytidine (ac(4)C) sites in RNA, on the middle C of a CCG motif. Modifications are found in rRNA, ncRNA, mRNA and tRNA. More acetylation is observed at 85 than at 65 or 75 degrees Celsius. This is tRNA(Met) cytidine acetyltransferase TmcA from Pyrococcus furiosus (strain ATCC 43587 / DSM 3638 / JCM 8422 / Vc1).